A 324-amino-acid polypeptide reads, in one-letter code: Beta-ketoacyl-[acyl-carrier-protein] synthase III (324 aa).

Active-site residues include Cys-112 and His-249. Residues 250–254 (QANIR) are ACP-binding. The active site involves Asn-279.

This sequence belongs to the thiolase-like superfamily. FabH family. As to quaternary structure, homodimer.

The protein localises to the cytoplasm. It carries out the reaction malonyl-[ACP] + acetyl-CoA + H(+) = 3-oxobutanoyl-[ACP] + CO2 + CoA. It participates in lipid metabolism; fatty acid biosynthesis. Functionally, catalyzes the condensation reaction of fatty acid synthesis by the addition to an acyl acceptor of two carbons from malonyl-ACP. Catalyzes the first condensation reaction which initiates fatty acid synthesis and may therefore play a role in governing the total rate of fatty acid production. Possesses both acetoacetyl-ACP synthase and acetyl transacylase activities. Its substrate specificity determines the biosynthesis of branched-chain and/or straight-chain of fatty acids. This is Beta-ketoacyl-[acyl-carrier-protein] synthase III from Streptococcus sanguinis (strain SK36).